Reading from the N-terminus, the 233-residue chain is MGQTRRLRRLGRHRCRGQRVRWRTATSADHPRRGRPAAQAVRRRRPVSLDGRYGIQAVRRRAVSIFPCPLSRVIERLKQALYPKLLPIARNWWAKLGREAPWPDSLDDWLASCHAAGQTRSTALMLKYGTNDWNALHQDLYGELVFPLQVVINLSDPETDYTGGEFLLVEQRPRAQSRGTAMQLPQGHGYVFTTRDRPVRTSRGWSASPVRHGLSTIRSGERYAMGLIFHDAA.

Residues 21–43 (RWRTATSADHPRRGRPAAQAVRR) are disordered.

This is an uncharacterized protein from Mycobacterium tuberculosis (strain CDC 1551 / Oshkosh).